A 796-amino-acid chain; its full sequence is Peroxisome proliferator-activated receptor gamma coactivator 1-alpha (796 aa).

Lysine 77 carries the N6-acetyllysine modification. Residues 98–138 (PVDEDGLPSFDALTDGDVTTENEASPSSMPDGTPPPQEAEE) form a disordered region. Over residues 114–127 (DVTTENEASPSSMP) the composition is skewed to polar residues. The short motif at 142–146 (LKKLL) is the LXXLL motif element. Lysine 144 bears the N6-acetyllysine mark. A Phosphothreonine; by AMPK modification is found at threonine 176. Lysine 182 is modified (N6-acetyllysine). A disordered region spans residues 211–274 (YLTTNDDPPH…PNDPKGSPFE (64 aa)). Positions 217–235 (DPPHTKPTETRNSSRDKCT) are enriched in basic and acidic residues. Residues 242 to 258 (TQSQSQHLQAKPTSLSL) are compositionally biased toward polar residues. N6-acetyllysine occurs at positions 252, 269, 276, and 319. A disordered region spans residues 288-349 (GTAGLTPPTT…NNSTKKGPEQ (62 aa)). Positions 291 to 337 (GLTPPTTPPHKANQDNPFRASPKLKPPCKTVVPPPSKKTRYSESSGT) are interaction with PPARG. Residues 332–344 (SESSGTHGNNSTK) are compositionally biased toward polar residues. 3 positions are modified to N6-acetyllysine: lysine 345, lysine 411, and lysine 449. The mediates interaction with RNF34 stretch occupies residues 348-796 (EQSELYAQLS…LKEAQRSLRR (449 aa)). Residues 463 to 487 (HFGHPSQAVFDDEADKTSELRDSDF) are disordered. Over residues 477 to 486 (DKTSELRDSD) the composition is skewed to basic and acidic residues. The residue at position 537 (serine 537) is a Phosphoserine; by AMPK. 2 disordered regions span residues 541–637 (FNSP…SYEE) and 648–667 (YRREYEKRESERAKQRERQR). Low complexity predominate over residues 568–603 (RSFSQHRSCSRSPYSRSRSRSPGSRSSSRSCYYSES). Residues 620–629 (SRSRSPYSRR) are compositionally biased toward basic residues. An RRM domain is found at 675–751 (RVIYVGKIRP…TDFELYFCGR (77 aa)). Residues lysine 756 and lysine 777 each carry the N6-acetyllysine modification.

Homooligomer. Interacts with MYBBP1A; inhibits MYBBP1A transcriptional activation. Interacts with PRDM16, LPIN1 and PML. Interacts (via LXXLL motif) with RORA and RORC (via AF-2 motif); activates RORA and RORC transcriptional activation. Interacts with LRPPRC. Interacts with FOXO1. Interacts with NR5A2. In terms of processing, phosphorylation by AMPK in skeletal muscle increases activation of its own promoter. Phosphorylated by CLK2. Post-translationally, heavily acetylated by KAT2A/GCN5 under conditions of high nutrients, leading to inactivation of PPARGC1A. Deacetylated by SIRT1 in low nutrients/high NAD conditions, leading to its activation. Ubiquitinated. Ubiquitination by RNF34 induces proteasomal degradation.

The protein resides in the nucleus. It localises to the PML body. Transcriptional coactivator for steroid receptors and nuclear receptors. Greatly increases the transcriptional activity of PPARG and thyroid hormone receptor on the uncoupling protein promoter. Can regulate key mitochondrial genes that contribute to the program of adaptive thermogenesis. Plays an essential role in metabolic reprogramming in response to dietary availability through coordination of the expression of a wide array of genes involved in glucose and fatty acid metabolism. Acts as a key regulator of gluconeogenesis: stimulates hepatic gluconeogenesis by increasing the expression of gluconeogenic enzymes, and acting together with FOXO1 to promote the fasting gluconeogenic program. Induces the expression of PERM1 in the skeletal muscle in an ESRRA-dependent manner. Also involved in the integration of the circadian rhythms and energy metabolism. Required for oscillatory expression of clock genes, such as BMAL1 and NR1D1, through the coactivation of RORA and RORC, and metabolic genes, such as PDK4 and PEPCK. This Sus scrofa (Pig) protein is Peroxisome proliferator-activated receptor gamma coactivator 1-alpha (PPARGC1A).